Here is a 451-residue protein sequence, read N- to C-terminus: Phosphoglucosamine mutase (451 aa).

S102 acts as the Phosphoserine intermediate in catalysis. Residues S102, D243, D245, and D247 each coordinate Mg(2+). The residue at position 102 (S102) is a Phosphoserine.

This sequence belongs to the phosphohexose mutase family. Requires Mg(2+) as cofactor. Activated by phosphorylation.

It carries out the reaction alpha-D-glucosamine 1-phosphate = D-glucosamine 6-phosphate. Its function is as follows. Catalyzes the conversion of glucosamine-6-phosphate to glucosamine-1-phosphate. This chain is Phosphoglucosamine mutase, found in Brucella abortus (strain 2308).